The primary structure comprises 195 residues: Imidazoleglycerol-phosphate dehydratase (195 aa).

It belongs to the imidazoleglycerol-phosphate dehydratase family.

The protein localises to the cytoplasm. It carries out the reaction D-erythro-1-(imidazol-4-yl)glycerol 3-phosphate = 3-(imidazol-4-yl)-2-oxopropyl phosphate + H2O. It participates in amino-acid biosynthesis; L-histidine biosynthesis; L-histidine from 5-phospho-alpha-D-ribose 1-diphosphate: step 6/9. The chain is Imidazoleglycerol-phosphate dehydratase from Thiobacillus denitrificans (strain ATCC 25259 / T1).